Here is a 933-residue protein sequence, read N- to C-terminus: Valine--tRNA ligase (933 aa).

The 'HIGH' region motif lies at 58 to 68 (PNVTGSLHMGH). The 'KMSKS' region signature appears at 556–560 (KMSKS). Lys559 provides a ligand contact to ATP. Coiled-coil stretches lie at residues 807 to 833 (VTKNQNLLNLLKKATQDIQALTRANKV) and 864 to 933 (EGLV…LGLK).

It belongs to the class-I aminoacyl-tRNA synthetase family. ValS type 1 subfamily. In terms of assembly, monomer.

It localises to the cytoplasm. It catalyses the reaction tRNA(Val) + L-valine + ATP = L-valyl-tRNA(Val) + AMP + diphosphate. Its function is as follows. Catalyzes the attachment of valine to tRNA(Val). As ValRS can inadvertently accommodate and process structurally similar amino acids such as threonine, to avoid such errors, it has a 'posttransfer' editing activity that hydrolyzes mischarged Thr-tRNA(Val) in a tRNA-dependent manner. This Prochlorococcus marinus (strain SARG / CCMP1375 / SS120) protein is Valine--tRNA ligase.